A 264-amino-acid chain; its full sequence is Thymidylate synthase (264 aa).

Position 21 (R21) interacts with dUMP. H51 contributes to the (6R)-5,10-methylene-5,6,7,8-tetrahydrofolate binding site. DUMP is bound at residue 126-127; it reads RR. C146 functions as the Nucleophile in the catalytic mechanism. Residues 166-169, N177, and 207-209 each bind dUMP; these read RSAD and HLY. D169 is a (6R)-5,10-methylene-5,6,7,8-tetrahydrofolate binding site. A263 is a (6R)-5,10-methylene-5,6,7,8-tetrahydrofolate binding site.

Belongs to the thymidylate synthase family. Bacterial-type ThyA subfamily. Homodimer.

The protein localises to the cytoplasm. The catalysed reaction is dUMP + (6R)-5,10-methylene-5,6,7,8-tetrahydrofolate = 7,8-dihydrofolate + dTMP. Its pathway is pyrimidine metabolism; dTTP biosynthesis. Catalyzes the reductive methylation of 2'-deoxyuridine-5'-monophosphate (dUMP) to 2'-deoxythymidine-5'-monophosphate (dTMP) while utilizing 5,10-methylenetetrahydrofolate (mTHF) as the methyl donor and reductant in the reaction, yielding dihydrofolate (DHF) as a by-product. This enzymatic reaction provides an intracellular de novo source of dTMP, an essential precursor for DNA biosynthesis. The chain is Thymidylate synthase from Bartonella tribocorum (strain CIP 105476 / IBS 506).